A 302-amino-acid polypeptide reads, in one-letter code: 4-hydroxy-tetrahydrodipicolinate synthase (302 aa).

Thr57 serves as a coordination point for pyruvate. Tyr145 serves as the catalytic Proton donor/acceptor. Lys173 functions as the Schiff-base intermediate with substrate in the catalytic mechanism. Ile213 provides a ligand contact to pyruvate.

This sequence belongs to the DapA family. As to quaternary structure, homotetramer; dimer of dimers.

The protein resides in the cytoplasm. The catalysed reaction is L-aspartate 4-semialdehyde + pyruvate = (2S,4S)-4-hydroxy-2,3,4,5-tetrahydrodipicolinate + H2O + H(+). The protein operates within amino-acid biosynthesis; L-lysine biosynthesis via DAP pathway; (S)-tetrahydrodipicolinate from L-aspartate: step 3/4. Catalyzes the condensation of (S)-aspartate-beta-semialdehyde [(S)-ASA] and pyruvate to 4-hydroxy-tetrahydrodipicolinate (HTPA). The chain is 4-hydroxy-tetrahydrodipicolinate synthase from Mycolicibacterium gilvum (strain PYR-GCK) (Mycobacterium gilvum (strain PYR-GCK)).